A 451-amino-acid chain; its full sequence is Inositol-pentakisphosphate 2-kinase (451 aa).

Residue M1 is modified to N-acetylmethionine. ATP is bound by residues 19–22 (GGAN) and R40. Positions 45 and 130 each coordinate substrate. Residues 147 to 149 (NDH) and 166 to 168 (EIK) each bind ATP. An EXKPK motif motif is present at residues 166–170 (EIKPK). Positions 170, 200, and 238 each coordinate substrate. Residue R241 participates in ATP binding. Zn(2+) is bound by residues H320, C330, C333, and H346. A substrate-binding site is contributed by D368. Residue D407 participates in ATP binding. Residues K411, R415, and Y419 each contribute to the substrate site.

Belongs to the IPK1 type 2 family. Requires Zn(2+) as cofactor. In terms of tissue distribution, strongly expressed in leaves and cauline leaves. Weakly expressed in siliques and flowers. In flower, it is expressed in the major organs of developing flower buds. Strongly expressed in sepals, petals, in the male and female organs of immature and mature flower buds. Strongly expressed in the gynoecium and carpels which are fused to form the gynoecium. Also expressed in the transmitting tissue and ovules.

The catalysed reaction is 1D-myo-inositol 1,3,4,5,6-pentakisphosphate + ATP = 1D-myo-inositol hexakisphosphate + ADP + H(+). Phosphorylates Ins(1,3,4,5,6)P5 at position 2 to form Ins(1,2,3,4,5,6)P6 (InsP6 or phytate). Phytate is a regulator of intracellular signaling, a highly abundant animal antinutrient, and a phosphate store in plant seeds. Also phosphorylates Ins(1,3,4,6)P4 and Ins(1,4,5,6)P4 to produce Ins(1,2,3,4,6)P5 and Ins(1,2,4,5,6)P5. This chain is Inositol-pentakisphosphate 2-kinase (IPK1), found in Arabidopsis thaliana (Mouse-ear cress).